The primary structure comprises 135 residues: Congerin-1 (135 aa).

N-acetylserine is present on S1. A Galectin domain is found at 3–135 (GLQVKNFDFT…GDARLTLVKE (133 aa)). 70 to 76 (WETEQRS) serves as a coordination point for a beta-D-galactoside.

In terms of assembly, homodimer.

Its function is as follows. This protein binds beta-galactoside. Its physiological function is not yet known. This is Congerin-1 from Conger myriaster (Conger eel).